Here is a 1793-residue protein sequence, read N- to C-terminus: Non-reducing polyketide synthase adaA (1793 aa).

Positions 16–250 (NDDLKALFRG…YSKSLALPVY (235 aa)) are N-terminal acylcarrier protein transacylase domain (SAT). The region spanning 388–821 (DSKLAIVGMA…GGNTTLVLED (434 aa)) is the Ketosynthase family 3 (KS3) domain. Catalysis depends on for beta-ketoacyl synthase activity residues cysteine 561, histidine 696, and histidine 739. The tract at residues 923-1245 (VFTFTGQGAY…KSLCTLHLAG (323 aa)) is malonyl-CoA:ACP transacylase (MAT) domain. Positions 1312–1634 (TSLIHQVTEE…RLLMDRFFSP (323 aa)) are product template (PT) domain. Residues 1316 to 1452 (HQVTEETVDK…GSIKYPADPT (137 aa)) form an N-terminal hotdog fold region. Residues 1316–1629 (HQVTEETVDK…FRRVPRLLMD (314 aa)) form the PKS/mFAS DH domain. Histidine 1348 acts as the Proton acceptor; for dehydratase activity in catalysis. Residues 1482 to 1629 (KASTLSKPLA…FRRVPRLLMD (148 aa)) form a C-terminal hotdog fold region. Catalysis depends on aspartate 1540, which acts as the Proton donor; for dehydratase activity. Low complexity predominate over residues 1642-1659 (AAPAPAPAAVPAVKKQPP). Positions 1642–1714 (AAPAPAPAAV…TTEQEAPVAD (73 aa)) are disordered. Residues 1660–1681 (TETIQPQAPKTEQKQDQLQLPN) show a composition bias toward polar residues. Residues 1683–1706 (ASAAPSTANSSSSPSSSGVATPTT) show a composition bias toward low complexity. The Carrier domain occupies 1716–1793 (SAVTGVAGKC…DLTGWLEQYC (78 aa)). At serine 1753 the chain carries O-(pantetheine 4'-phosphoryl)serine.

Requires pantetheine 4'-phosphate as cofactor.

It catalyses the reaction holo-[ACP] + 9 malonyl-CoA + acetyl-CoA + 9 H(+) = 3-(2,4-dioxopentyl)-3,6,8,9-tetrahydroxy-1-oxo-1,2,3,4-tetrahydroanthracene-2-carboxyl-[ACP] + 9 CO2 + 10 CoA + 2 H2O. Its pathway is secondary metabolite biosynthesis. Functionally, non-reducing polyketide synthase; part of the gene cluster that mediates the biosynthesis of the linear tetracyclic TAN-1612 neuropeptide Y receptor antagonist. The decaketide backbone of TAN-1612 is synthesized by the non-reducing polyketide synthase adaA via condensation of one acetyl-CoA starter unit with 9 malonyl-CoA units. The FAD-dependent monooxygenase adaC then performs hydroxylation at C2 while the polaketide chain is still attached to the NRPKS adaA. The alpha-hydroxylation step at C2 appears to be crucial for the following C18-C1 Claisen cyclization and release of the C9-hydroxyl version of TAN-1612 from the NRPKS adaA, two steps performed by the lactamase-like protein adaB. Finally, the O-methyltransferase adaD performs the C9 O-methylation to complete the biosynthesis of TAN-1612. The polypeptide is Non-reducing polyketide synthase adaA (Aspergillus niger (strain ATCC MYA-4892 / CBS 513.88 / FGSC A1513)).